A 102-amino-acid chain; its full sequence is Mitochondrial import inner membrane translocase subunit Tim10 B (102 aa).

The short motif at 27-51 (CFQRCVPSLHHRALDAEEEACLHSC) is the Twin CX3C motif element. 2 disulfide bridges follow: Cys-27-Cys-51 and Cys-31-Cys-47.

Component of the TIM22 complex, which core is composed of TIMM22, associated with TIMM10 (TIMM10A and/or TIMM10B), TIMM9, AGK and TIMM29.

The protein resides in the mitochondrion inner membrane. Its function is as follows. Component of the TIM22 complex, a complex that mediates the import and insertion of multi-pass transmembrane proteins into the mitochondrial inner membrane. The TIM22 complex forms a twin-pore translocase that uses the membrane potential as the external driving force. In the TIM22 complex, it may act as a docking point for the soluble 70 kDa complex that guides the target proteins in transit through the aqueous mitochondrial intermembrane space. The protein is Mitochondrial import inner membrane translocase subunit Tim10 B (TIMM10B) of Pongo abelii (Sumatran orangutan).